We begin with the raw amino-acid sequence, 73 residues long: Guanine nucleotide-binding protein G(I)/G(S)/G(O) subunit gamma-11 (73 aa).

Residues 51–73 (DPLVKGIPEDKNPFKEKGSCVIS) form a disordered region. Cys70 carries the post-translational modification Cysteine methyl ester. The S-farnesyl cysteine moiety is linked to residue Cys70. The propeptide at 71–73 (VIS) is removed in mature form.

Belongs to the G protein gamma family. In terms of assembly, g proteins are composed of 3 units, alpha, beta and gamma. Interacts with beta-1 and beta-3, but not with beta-2. Abundantly expressed in all tissues tested except for brain.

It localises to the cell membrane. Functionally, guanine nucleotide-binding proteins (G proteins) are involved as a modulator or transducer in various transmembrane signaling systems. The beta and gamma chains are required for the GTPase activity, for replacement of GDP by GTP, and for G protein-effector interaction. The chain is Guanine nucleotide-binding protein G(I)/G(S)/G(O) subunit gamma-11 (GNG11) from Homo sapiens (Human).